A 358-amino-acid chain; its full sequence is Probable D-xylulose reductase A (358 aa).

Residues Cys-47, His-72, and Glu-73 each coordinate Zn(2+). 182 to 187 contacts NAD(+); it reads GAGPVG.

Belongs to the zinc-containing alcohol dehydrogenase family. Zn(2+) is required as a cofactor.

It carries out the reaction xylitol + NAD(+) = D-xylulose + NADH + H(+). Its pathway is carbohydrate degradation; L-arabinose degradation via L-arabinitol; D-xylulose 5-phosphate from L-arabinose (fungal route): step 4/5. Functionally, xylitol dehydrogenase which catalyzes the conversion of xylitol to D-xylulose. Xylose is a major component of hemicelluloses such as xylan. Most fungi utilize D-xylose via three enzymatic reactions, xylose reductase (XR), xylitol dehydrogenase (XDH), and xylulokinase, to form xylulose 5-phosphate, which enters pentose phosphate pathway. This Neosartorya fischeri (strain ATCC 1020 / DSM 3700 / CBS 544.65 / FGSC A1164 / JCM 1740 / NRRL 181 / WB 181) (Aspergillus fischerianus) protein is Probable D-xylulose reductase A (xdhA).